We begin with the raw amino-acid sequence, 114 residues long: DNA-binding protein rrnAC3180 (114 aa).

A compositionally biased stretch (acidic residues) spans 1-11 (MSGDPSEEELE). Residues 1 to 45 (MSGDPSEEELEELRKKKMEQLKEQQGGEGEGQEAAQQQAEAQKQA) are disordered. Residues 12–22 (ELRKKKMEQLK) are compositionally biased toward basic and acidic residues. Over residues 32–45 (QEAAQQQAEAQKQA) the composition is skewed to low complexity.

This sequence belongs to the PDCD5 family.

The protein is DNA-binding protein rrnAC3180 of Haloarcula marismortui (strain ATCC 43049 / DSM 3752 / JCM 8966 / VKM B-1809) (Halobacterium marismortui).